The chain runs to 447 residues: Alpha-1,6-mannosyl-glycoprotein 2-beta-N-acetylglucosaminyltransferase (447 aa).

The Cytoplasmic portion of the chain corresponds to 1–9; it reads MRFRIYKRK. Residues 10–29 form a helical; Signal-anchor for type II membrane protein membrane-spanning segment; the sequence is VLILTLVVAACGFVLWSSNG. Topologically, residues 30 to 447 are lumenal; sequence RQRKNEALAP…ELCKSYRRLQ (418 aa). N-linked (GlcNAc...) asparagine glycosylation is found at Asn69 and Asn86. Substrate is bound by residues 123 to 127 and Asp154; that span reads QVHNR. A disulfide bridge links Cys196 with Cys210. 229–233 contacts substrate; the sequence is QTKHH. Asp261 contacts Mn(2+). Cysteines 283 and 286 form a disulfide. A substrate-binding site is contributed by Arg298. 3 disulfides stabilise this stretch: Cys334/Cys357, Cys339/Cys440, and Cys378/Cys386. His374 is a Mn(2+) binding site.

Belongs to the glycosyltransferase 16 (GT16) protein family. Homodimer. Mn(2+) serves as cofactor.

The protein localises to the golgi apparatus membrane. It catalyses the reaction an N(4)-{beta-D-GlcNAc-(1-&gt;2)-alpha-D-Man-(1-&gt;3)-[alpha-D-Man-(1-&gt;6)]-beta-D-Man-(1-&gt;4)-beta-D-GlcNAc-(1-&gt;4)-beta-D-GlcNAc}-L-asparaginyl-[protein] + UDP-N-acetyl-alpha-D-glucosamine = N(4)-{beta-D-GlcNAc-(1-&gt;2)-alpha-D-Man-(1-&gt;3)-[beta-D-GlcNAc-(1-&gt;2)-alpha-D-Man-(1-&gt;6)]-beta-D-Man-(1-&gt;4)-beta-D-GlcNAc-(1-&gt;4)-beta-D-GlcNAc}-L-asparaginyl-[protein] + UDP + H(+). Its pathway is protein modification; protein glycosylation. Functionally, plays an essential role in protein N-glycosylation. Catalyzes the transfer of N-acetylglucosamine (GlcNAc) onto the free terminal mannose moiety in the core structure of the nascent N-linked glycan chain, giving rise to the second branch in complex glycans. This chain is Alpha-1,6-mannosyl-glycoprotein 2-beta-N-acetylglucosaminyltransferase (MGAT2), found in Homo sapiens (Human).